The chain runs to 716 residues: Antibacterial effector protein Tle3 (716 aa).

The interval 68–87 (PTLPGGQANPGYLTPAGYSL) is disordered.

Interacts in the cytoplasm with the adapter protein Tla3. Interacts in the periplasm with the immunity protein Tli3.

It is found in the secreted. The protein resides in the host periplasm. Neutralized by the immunity protein Tli3 in the periplasm of P.aeruginosa cells. In terms of biological role, antibacterial effector. Is toxic once delivered in the periplasm of prey bacteria. This is Antibacterial effector protein Tle3 from Pseudomonas aeruginosa (strain ATCC 15692 / DSM 22644 / CIP 104116 / JCM 14847 / LMG 12228 / 1C / PRS 101 / PAO1).